A 400-amino-acid chain; its full sequence is WW domain-containing transcription regulator protein 1 (400 aa).

Residue lysine 46 forms a Glycyl lysine isopeptide (Lys-Gly) (interchain with G-Cter in ubiquitin) linkage. The segment at phenylalanine 52 to serine 117 is disordered. Residues histidine 61–serine 70 are compositionally biased toward polar residues. Serine 62 bears the Phosphoserine mark. Residue serine 89 is modified to Phosphoserine; by LATS2. Phosphoserine is present on serine 105. In terms of domain architecture, WW spans leucine 124–lysine 157. The segment at proline 222–leucine 400 is required for interaction with PALS1. A coiled-coil region spans residues leucine 225 to alanine 259. Serine 295 carries the phosphoserine modification. Serine 311 carries the post-translational modification Phosphoserine; by LATS2. Residues glutamate 394–leucine 400 carry the PDZ-binding motif.

As to quaternary structure, binds to SLC9A3R2 via the PDZ motif at the plasma membrane. Binds to YWHAZ in vivo and in vitro through the phosphoserine-binding motif RSHSSP. Interacts (via coiled-coil domain) with SMAD2 (via MH1 domain), SMAD3 and SMAD4. Interacts with MED15. Interacts with PAX8 and NKX2-1. Interacts with TEAD1, TEAD2, TEAD3 and TEAD4. Interacts (via WW domain) with PALS1. Interacts with LATS1. Interacts with YAP1 (when phosphorylated at 'Ser-127'). Interacts (via WW domain) with PRRG4 (via cytoplasmic domain). Interacts (via WW domain) with AMOTL2 (via PPXY motif); the interaction promotes WWTR1/TAZ localization to the cytoplasm and tight junctions, thereby inhibiting its transcriptional coactivator properties. Interacts (via WW domain) with AMOT isoform 1; the interaction facilitates translocation of WWTR1/TAZ to the cytoplasm. In terms of processing, phosphorylated by LATS2 and STK3/MST2. Phosphorylation by LATS2 results in creation of 14-3-3 binding sites, retention in the cytoplasm, and functional inactivation. Phosphorylation results in the inhibition of transcriptional coactivation through YWHAZ-mediated nuclear export. Phosphorylated in the nucleus by PRP4K; phosphorylation leads to nuclear exclusion. Ubiquitinated at Lys-46; leading to proteasomal degradation. Deubiquitinated and stabilized by UCHL1 at Lys-46; leading to inhibition of osteoclastogenesis. As to expression, highly expressed in kidney, heart, placenta and lung. Expressed in the thyroid tissue.

The protein localises to the nucleus. The protein resides in the cytoplasm. It localises to the cell membrane. Its subcellular location is the cell junction. It is found in the tight junction. Transcriptional coactivator which acts as a downstream regulatory target in the Hippo signaling pathway that plays a pivotal role in organ size control and tumor suppression by restricting proliferation and promoting apoptosis. The core of this pathway is composed of a kinase cascade wherein STK3/MST2 and STK4/MST1, in complex with its regulatory protein SAV1, phosphorylates and activates LATS1/2 in complex with its regulatory protein MOB1, which in turn phosphorylates and inactivates YAP1 oncoprotein and WWTR1/TAZ. WWTR1 enhances PAX8 and NKX2-1/TTF1-dependent gene activation. In conjunction with YAP1, involved in the regulation of TGFB1-dependent SMAD2 and SMAD3 nuclear accumulation. Plays a key role in coupling SMADs to the transcriptional machinery such as the mediator complex. Regulates embryonic stem-cell self-renewal, promotes cell proliferation and epithelial-mesenchymal transition. This Homo sapiens (Human) protein is WW domain-containing transcription regulator protein 1.